The following is a 166-amino-acid chain: Lipoprotein signal peptidase (166 aa).

The next 4 helical transmembrane spans lie at 9-29 (ASGA…FDQL), 45-65 (ALTS…FGFL), 71-91 (WQRW…CFLL), and 100-120 (FSVS…DRLV). Catalysis depends on residues D126 and D144. Residues 135–155 (WHFPAFNLADSAITVGAVLLI) form a helical membrane-spanning segment.

The protein belongs to the peptidase A8 family.

The protein resides in the cell inner membrane. It catalyses the reaction Release of signal peptides from bacterial membrane prolipoproteins. Hydrolyzes -Xaa-Yaa-Zaa-|-(S,diacylglyceryl)Cys-, in which Xaa is hydrophobic (preferably Leu), and Yaa (Ala or Ser) and Zaa (Gly or Ala) have small, neutral side chains.. It participates in protein modification; lipoprotein biosynthesis (signal peptide cleavage). This protein specifically catalyzes the removal of signal peptides from prolipoproteins. In Burkholderia cenocepacia (strain HI2424), this protein is Lipoprotein signal peptidase.